We begin with the raw amino-acid sequence, 1002 residues long: Collagen alpha-2(I) chain (1002 aa).

The disordered stretch occupies residues 1–1002; sequence SGGFDFSFLP…PGPPGPPGAS (1002 aa). 4-hydroxyproline is present on residues P10, P13, P28, and P34. Positions 17 to 60 are enriched in low complexity; sequence GPMGLMGPRGPPGASGAPGPQGFQGPAGEPGEPGQTGPAGARGP. K89 carries the post-translational modification 5-hydroxylysine; alternate. K89 carries an O-linked (Gal...) hydroxylysine; alternate glycan. Composition is skewed to low complexity over residues 145–166 and 211–232; these read SRGSDGSVGPVGPAGPIGSAGP and PGANGLTGAKGAAGLPGVAGAP. Residues 266–275 show a composition bias toward gly residues; the sequence is GESGGKGEPG. Residues 276 to 286 are compositionally biased toward low complexity; the sequence is SAGPQGPPGSS. Over residues 308 to 317 the composition is skewed to gly residues; that stretch reads GLRGGPGSRG. Positions 330–346 are enriched in low complexity; that stretch reads PAGARGASGPAGVRGPS. 2 positions are modified to 4-hydroxyproline: P352 and P355. The span at 381–400 shows a compositional bias: low complexity; the sequence is LPGIDGRPGPIGPAGARGEA. Positions 449 to 458 are enriched in gly residues; that stretch reads GVQGGKGEQG. Composition is skewed to low complexity over residues 505–522 and 534–544; these read PGESGAVGPSGAIGSRGP and EPGVVGAPGTA. The segment covering 545-554 has biased composition (gly residues); it reads GPAGSGGLPG. Low complexity-rich tracts occupy residues 577-621 and 628-648; these read VGTT…PRGS and VGPAGPNGFAGPAGAAGQPGA. The segment covering 649–658 has biased composition (basic and acidic residues); it reads KGERGTKGPK. A compositionally biased stretch (low complexity) spans 666–676; sequence PTGPVGSAGPA. Residues 686–695 show a composition bias toward gly residues; that stretch reads GSRGDGGPPG. The segment covering 697–706 has biased composition (low complexity); sequence TGFPGAAGRT. Residues 743 to 752 are compositionally biased toward gly residues; that stretch reads GETGAGGPPG. 2 stretches are compositionally biased toward low complexity: residues 760-787 and 795-805; these read SGEPGTAGPPGTAGPQGLLGAPGILGLP and LPGVAGAVGEP. The segment covering 806-828 has biased composition (gly residues); that stretch reads GPLGIGPPGARGPSGGVGPGVNG. Residues 833–851 show a composition bias toward basic and acidic residues; the sequence is AGRDGPPGRDGLPGHKGER. Low complexity predominate over residues 853–898; sequence YAGNAGPVGAAGAPGPHGAVGPAGKHGNRGEPGPVGSAGPVGALGP. The span at 908–919 shows a compositional bias: basic and acidic residues; it reads RGDKGEAGDKGP. The segment covering 987–1002 has biased composition (pro residues); that stretch reads SGPPGPPGPPGPPGAS.

The protein belongs to the fibrillar collagen family. In terms of assembly, trimers of one alpha 2(I) and two alpha 1(I) chains. Interacts (via C-terminus) with TMEM131 (via PapD-L domain); the interaction is direct and is involved in assembly and TRAPPIII ER-to-Golgi transport complex-dependent secretion of collagen. Post-translationally, prolines at the third position of the tripeptide repeating unit (G-X-Y) are hydroxylated in some or all of the chains. In terms of tissue distribution, expressed in bones.

The protein resides in the secreted. Its subcellular location is the extracellular space. The protein localises to the extracellular matrix. Its function is as follows. Type I collagen is a member of group I collagen (fibrillar forming collagen). The protein is Collagen alpha-2(I) chain of Glossotherium robustum (Ground sloth).